The chain runs to 81 residues: ATP synthase subunit c (81 aa).

Transmembrane regions (helical) follow at residues 6 to 26 (AAASVIAAALAVGLAAIGPGI) and 57 to 77 (LAFMEALTIYGLVVALVLLFA).

This sequence belongs to the ATPase C chain family. F-type ATPases have 2 components, F(1) - the catalytic core - and F(0) - the membrane proton channel. F(1) has five subunits: alpha(3), beta(3), gamma(1), delta(1), epsilon(1). F(0) has four main subunits: a(1), b(1), b'(1) and c(10-14). The alpha and beta chains form an alternating ring which encloses part of the gamma chain. F(1) is attached to F(0) by a central stalk formed by the gamma and epsilon chains, while a peripheral stalk is formed by the delta, b and b' chains.

It localises to the cellular thylakoid membrane. Functionally, f(1)F(0) ATP synthase produces ATP from ADP in the presence of a proton or sodium gradient. F-type ATPases consist of two structural domains, F(1) containing the extramembraneous catalytic core and F(0) containing the membrane proton channel, linked together by a central stalk and a peripheral stalk. During catalysis, ATP synthesis in the catalytic domain of F(1) is coupled via a rotary mechanism of the central stalk subunits to proton translocation. In terms of biological role, key component of the F(0) channel; it plays a direct role in translocation across the membrane. A homomeric c-ring of between 10-14 subunits forms the central stalk rotor element with the F(1) delta and epsilon subunits. The polypeptide is ATP synthase subunit c (Picosynechococcus sp. (strain ATCC 27264 / PCC 7002 / PR-6) (Agmenellum quadruplicatum)).